Reading from the N-terminus, the 107-residue chain is Late histone H2B.L4 (107 aa).

S94 carries an O-linked (GlcNAc) serine glycan. Residue K102 forms a Glycyl lysine isopeptide (Lys-Gly) (interchain with G-Cter in ubiquitin) linkage.

The protein belongs to the histone H2B family. As to quaternary structure, the nucleosome is a histone octamer containing two molecules each of H2A, H2B, H3 and H4 assembled in one H3-H4 heterotetramer and two H2A-H2B heterodimers. The octamer wraps approximately 147 bp of DNA. Monoubiquitination gives a specific tag for epigenetic transcriptional activation and is also prerequisite for histone H3 'Lys-4' and 'Lys-79' methylation. Post-translationally, glcNAcylation at Ser-94 promotes monoubiquitination of Lys-102. It fluctuates in response to extracellular glucose, and associates with transcribed genes.

The protein localises to the nucleus. It is found in the chromosome. Functionally, core component of nucleosome. Nucleosomes wrap and compact DNA into chromatin, limiting DNA accessibility to the cellular machineries which require DNA as a template. Histones thereby play a central role in transcription regulation, DNA repair, DNA replication and chromosomal stability. DNA accessibility is regulated via a complex set of post-translational modifications of histones, also called histone code, and nucleosome remodeling. This is Late histone H2B.L4 from Strongylocentrotus purpuratus (Purple sea urchin).